A 178-amino-acid polypeptide reads, in one-letter code: ATP synthase subunit delta (178 aa).

The protein belongs to the ATPase delta chain family. As to quaternary structure, F-type ATPases have 2 components, F(1) - the catalytic core - and F(0) - the membrane proton channel. F(1) has five subunits: alpha(3), beta(3), gamma(1), delta(1), epsilon(1). F(0) has three main subunits: a(1), b(2) and c(10-14). The alpha and beta chains form an alternating ring which encloses part of the gamma chain. F(1) is attached to F(0) by a central stalk formed by the gamma and epsilon chains, while a peripheral stalk is formed by the delta and b chains.

It is found in the cell membrane. F(1)F(0) ATP synthase produces ATP from ADP in the presence of a proton or sodium gradient. F-type ATPases consist of two structural domains, F(1) containing the extramembraneous catalytic core and F(0) containing the membrane proton channel, linked together by a central stalk and a peripheral stalk. During catalysis, ATP synthesis in the catalytic domain of F(1) is coupled via a rotary mechanism of the central stalk subunits to proton translocation. Functionally, this protein is part of the stalk that links CF(0) to CF(1). It either transmits conformational changes from CF(0) to CF(1) or is implicated in proton conduction. This Streptococcus equinus (Streptococcus bovis) protein is ATP synthase subunit delta.